The sequence spans 393 residues: Acetylornithine aminotransferase 1 (393 aa).

Arginine 131 serves as a coordination point for N(2)-acetyl-L-ornithine. Position 215–218 (215–218 (DEVQ)) interacts with pyridoxal 5'-phosphate. Position 244 is an N6-(pyridoxal phosphate)lysine (lysine 244). Threonine 272 contributes to the N(2)-acetyl-L-ornithine binding site. Residue threonine 273 coordinates pyridoxal 5'-phosphate.

The protein belongs to the class-III pyridoxal-phosphate-dependent aminotransferase family. ArgD subfamily. As to quaternary structure, homodimer. Pyridoxal 5'-phosphate is required as a cofactor.

Its subcellular location is the cytoplasm. The catalysed reaction is N(2)-acetyl-L-ornithine + 2-oxoglutarate = N-acetyl-L-glutamate 5-semialdehyde + L-glutamate. It participates in amino-acid biosynthesis; L-arginine biosynthesis; N(2)-acetyl-L-ornithine from L-glutamate: step 4/4. The sequence is that of Acetylornithine aminotransferase 1 from Bordetella bronchiseptica (strain ATCC BAA-588 / NCTC 13252 / RB50) (Alcaligenes bronchisepticus).